Reading from the N-terminus, the 350-residue chain is tRNA uridine(34) hydroxylase (350 aa).

The Rhodanese domain maps to 146–240 (DDPDAVFIDM…YARRARAQGL (95 aa)). The active-site Cysteine persulfide intermediate is the cysteine 200. A compositionally biased stretch (basic and acidic residues) spans 319 to 328 (RRRRAGRENG). The tract at residues 319 to 350 (RRRRAGRENGNKIFNKSRGRLNSKLSIPDPAE) is disordered.

It belongs to the TrhO family.

The catalysed reaction is uridine(34) in tRNA + AH2 + O2 = 5-hydroxyuridine(34) in tRNA + A + H2O. Functionally, catalyzes oxygen-dependent 5-hydroxyuridine (ho5U) modification at position 34 in tRNAs. The sequence is that of tRNA uridine(34) hydroxylase from Salmonella typhimurium (strain LT2 / SGSC1412 / ATCC 700720).